Consider the following 183-residue polypeptide: Endoribonuclease AbiQ (183 aa).

The protein belongs to the ToxN/AbiQ toxin family. In terms of assembly, forms a triangular heterohexamer with a single 35-nt-long repeat of RNA antitoxin AntiQ.

The protein localises to the cytoplasm. Toxic component of a type III toxin-antitoxin (TA) system. An endoribonuclease that is probably sequence-specific. It is neutralized by its cognate antitoxin RNA AntiQ, which has 2.8 35 nucleotide-long repeats. Cannot be cloned in L.lactis subsp. cremoris strain NZ9000 in the absence of the antitoxin gene; expression in strain NZ9000 even in the presence of antiQ inhibits growth in a bacteriostatic fashion. Confers resistance to 936 and c2 phages but not P335 phages in L.lactis, causes an abortive infection (Abi phenotype). Viral DNA is replicated but not cleaved from its concatemeric form, while the viral major structural protein is produced normally in the presence of this protein. Operon expression in E.coli confers resistance to 3 phages of the Myoviridae family (T4, RB69 and phage 2) and 1 of the Siphoviridae family (T5), but not other tested phages (T1, T3, lambda vir, HK97, Mu and pilH alpha). The presence of this operon in L.lactis subsp. lactis strain IL1403 during phage P008 infection alters the viral transcription profiles. In Lactococcus lactis subsp. lactis (Streptococcus lactis), this protein is Endoribonuclease AbiQ.